The sequence spans 1407 residues: DNA-directed RNA polymerase subunit beta' (1407 aa).

Zn(2+)-binding residues include cysteine 70, cysteine 72, cysteine 85, and cysteine 88. Positions 460, 462, and 464 each coordinate Mg(2+). Lysine 972 carries the N6-acetyllysine modification.

Belongs to the RNA polymerase beta' chain family. As to quaternary structure, the RNAP catalytic core consists of 2 alpha, 1 beta, 1 beta' and 1 omega subunit. When a sigma factor is associated with the core the holoenzyme is formed, which can initiate transcription. The cofactor is Mg(2+). Requires Zn(2+) as cofactor.

It catalyses the reaction RNA(n) + a ribonucleoside 5'-triphosphate = RNA(n+1) + diphosphate. Functionally, DNA-dependent RNA polymerase catalyzes the transcription of DNA into RNA using the four ribonucleoside triphosphates as substrates. The polypeptide is DNA-directed RNA polymerase subunit beta' (Escherichia coli O6:K15:H31 (strain 536 / UPEC)).